Consider the following 361-residue polypeptide: tRNA/tmRNA (uracil-C(5))-methyltransferase (361 aa).

Residues Gln-185, Tyr-213, Asn-218, Glu-234, and Asp-294 each coordinate S-adenosyl-L-methionine. Cys-319 serves as the catalytic Nucleophile. Glu-353 (proton acceptor) is an active-site residue.

The protein belongs to the class I-like SAM-binding methyltransferase superfamily. RNA M5U methyltransferase family. TrmA subfamily.

The catalysed reaction is uridine(54) in tRNA + S-adenosyl-L-methionine = 5-methyluridine(54) in tRNA + S-adenosyl-L-homocysteine + H(+). It catalyses the reaction uridine(341) in tmRNA + S-adenosyl-L-methionine = 5-methyluridine(341) in tmRNA + S-adenosyl-L-homocysteine + H(+). Functionally, dual-specificity methyltransferase that catalyzes the formation of 5-methyluridine at position 54 (m5U54) in all tRNAs, and that of position 341 (m5U341) in tmRNA (transfer-mRNA). The chain is tRNA/tmRNA (uracil-C(5))-methyltransferase from Pseudomonas savastanoi pv. phaseolicola (strain 1448A / Race 6) (Pseudomonas syringae pv. phaseolicola (strain 1448A / Race 6)).